The sequence spans 21 residues: Glucan endo-1,3-beta-glucosidase 2 (21 aa).

Residues 1-21 form a disordered region; sequence APGDLLWSDEFDGAAGSAPNP.

It carries out the reaction Hydrolysis of (1-&gt;3)-beta-D-glucosidic linkages in (1-&gt;3)-beta-D-glucans.. The sequence is that of Glucan endo-1,3-beta-glucosidase 2 from Papiliotrema laurentii (Cryptococcus laurentii).